The following is a 265-amino-acid chain: RING finger protein 208 (265 aa).

The disordered stretch occupies residues 83-106 (MPTLEGASHTPPLPRRPRKGSSEL). Serine 103 carries the phosphoserine modification. An RING-type zinc finger spans residues 147–194 (CPTCGHTYNVTQRRPRVLSCLHSVCEQCLQILYESCPKYKFISCPTCH).

This is RING finger protein 208 (Rnf208) from Mus musculus (Mouse).